A 92-amino-acid chain; its full sequence is Small ribosomal subunit protein uS19 (92 aa).

The protein belongs to the universal ribosomal protein uS19 family.

Functionally, protein S19 forms a complex with S13 that binds strongly to the 16S ribosomal RNA. The chain is Small ribosomal subunit protein uS19 from Bacillus cytotoxicus (strain DSM 22905 / CIP 110041 / 391-98 / NVH 391-98).